Here is a 500-residue protein sequence, read N- to C-terminus: Probable lipoprotein aminopeptidase LpqL (500 aa).

The N-terminal stretch at 1–24 is a signal peptide; the sequence is MVNKSRMMPAVLAVAVVVAFLTTG. Residue cysteine 25 is the site of N-palmitoyl cysteine attachment. Cysteine 25 carries the S-diacylglycerol cysteine lipid modification. The region spanning 140–231 is the PA domain; sequence VTGPLVAAPA…VTKSVGFQLR (92 aa). Positions 271 and 283 each coordinate Zn(2+). The active-site Proton acceptor is glutamate 316. Glutamate 317, aspartate 345, and histidine 448 together coordinate Zn(2+).

The protein belongs to the peptidase M28 family. M28A subfamily. It depends on Zn(2+) as a cofactor. In terms of processing, modified by Lgt on Cys-25 with an S-linked diacylglycerol with a mixture of C16 and C19 fatty acids (palmitic and tuberculostearic acid), signal peptide is removed by LspA, modified by Lnt with an amide-linked mixture of C16 and C19 fatty acids, expressed in M.bovis.

It is found in the cell membrane. It catalyses the reaction Release of an N-terminal amino acid, Xaa-|-Yaa-, in which Xaa is preferably Leu, but may be other amino acids including Pro although not Arg or Lys, and Yaa may be Pro. Amino acid amides and methyl esters are also readily hydrolyzed, but rates on arylamides are exceedingly low.. In terms of biological role, an aminopeptidase; acts on free N-terminal amino groups with a very strong preference for Leu in the first position. In Mycobacterium tuberculosis (strain ATCC 25618 / H37Rv), this protein is Probable lipoprotein aminopeptidase LpqL (lpqL).